The following is a 593-amino-acid chain: Chaperone protein DnaK (593 aa).

T181 carries the phosphothreonine; by autocatalysis modification.

This sequence belongs to the heat shock protein 70 family.

In terms of biological role, acts as a chaperone. The polypeptide is Chaperone protein DnaK (Mycoplasmoides gallisepticum (strain R(low / passage 15 / clone 2)) (Mycoplasma gallisepticum)).